The chain runs to 294 residues: NAD kinase (294 aa).

Asp-74 acts as the Proton acceptor in catalysis. Residues 74 to 75 (DG), 148 to 149 (NE), His-159, Arg-176, Asp-178, and 189 to 194 (TAYSLS) contribute to the NAD(+) site.

It belongs to the NAD kinase family. Requires a divalent metal cation as cofactor.

Its subcellular location is the cytoplasm. It catalyses the reaction NAD(+) + ATP = ADP + NADP(+) + H(+). Functionally, involved in the regulation of the intracellular balance of NAD and NADP, and is a key enzyme in the biosynthesis of NADP. Catalyzes specifically the phosphorylation on 2'-hydroxyl of the adenosine moiety of NAD to yield NADP. The protein is NAD kinase of Pseudoalteromonas translucida (strain TAC 125).